A 210-amino-acid chain; its full sequence is MIATTRDREGATMITFRLRLPCRTILRVFSRNPLVRGTDRLEAVVMLLAVTVSLLTIPFAAAAGTAVQDSRSHVYAHQAQTRHPATATVIDHEGVIDSNTTATSAPPRTKITVPARWVVNGIERSGEVNAKPGTKSGDRVGIWVDSAGQLVDEPAPPARAIADAALAALGLWLSVAAVAGALLALTRAILIRVRNASWQHDIDSLFCTQR.

Helical transmembrane passes span 43–63 (AVVM…AAAA) and 165–185 (ALAA…LLAL).

It localises to the cell membrane. This Mycobacterium tuberculosis (strain ATCC 25618 / H37Rv) protein is Probable membrane protein Rv1733c.